A 149-amino-acid chain; its full sequence is Ribonuclease pancreatic (149 aa).

The first 25 residues, 1-25, serve as a signal peptide directing secretion; sequence MGLEKSLILFPLFFLLLGWVQPSLG. Substrate is bound by residues Lys-32 and Arg-35. His-37 functions as the Proton acceptor in the catalytic mechanism. Disulfide bonds link Cys-51–Cys-109, Cys-65–Cys-120, Cys-83–Cys-135, and Cys-90–Cys-97. Residues 66-70 and Lys-91 each bind substrate; that span reads KPVNT. The active-site Proton donor is His-144.

The protein belongs to the pancreatic ribonuclease family. Monomer. Interacts with and forms tight 1:1 complexes with RNH1. Dimerization of two such complexes may occur. Interaction with RNH1 inhibits this protein. In terms of tissue distribution, pancreas.

The protein resides in the secreted. The enzyme catalyses an [RNA] containing cytidine + H2O = an [RNA]-3'-cytidine-3'-phosphate + a 5'-hydroxy-ribonucleotide-3'-[RNA].. The catalysed reaction is an [RNA] containing uridine + H2O = an [RNA]-3'-uridine-3'-phosphate + a 5'-hydroxy-ribonucleotide-3'-[RNA].. Functionally, endonuclease that catalyzes the cleavage of RNA on the 3' side of pyrimidine nucleotides. Acts on single-stranded and double-stranded RNA. This Mus musculus (Mouse) protein is Ribonuclease pancreatic (Rnase1).